Consider the following 225-residue polypeptide: Ribosomal RNA small subunit methyltransferase G (225 aa).

S-adenosyl-L-methionine contacts are provided by residues Gly84, Phe89, Asp107–Thr109, Ala135–Glu136, and Arg154.

Belongs to the methyltransferase superfamily. RNA methyltransferase RsmG family.

Its subcellular location is the cytoplasm. Specifically methylates the N7 position of a guanine in 16S rRNA. This Microcystis aeruginosa (strain NIES-843 / IAM M-2473) protein is Ribosomal RNA small subunit methyltransferase G.